Reading from the N-terminus, the 459-residue chain is Cysteine--tRNA ligase (459 aa).

Cysteine 29 lines the Zn(2+) pocket. Residues 31–41 (VTTYDYCHIGH) carry the 'HIGH' region motif. Zn(2+)-binding residues include cysteine 210, histidine 235, and glutamate 239. Residues 267-271 (KMSKS) carry the 'KMSKS' region motif. Lysine 270 contributes to the ATP binding site.

Belongs to the class-I aminoacyl-tRNA synthetase family. Monomer. Zn(2+) serves as cofactor.

The protein resides in the cytoplasm. The catalysed reaction is tRNA(Cys) + L-cysteine + ATP = L-cysteinyl-tRNA(Cys) + AMP + diphosphate. In Idiomarina loihiensis (strain ATCC BAA-735 / DSM 15497 / L2-TR), this protein is Cysteine--tRNA ligase.